Here is a 73-residue protein sequence, read N- to C-terminus: Dermaseptin-1 (73 aa).

Residues 1-22 form the signal peptide; that stretch reads MAFLKKSIFLALFLGMVSLSIC. Residues 23 to 43 constitute a propeptide, removed in mature form; that stretch reads EEEKRENEGEEEQEDDEQSEM. The disordered stretch occupies residues 25 to 46; sequence EKRENEGEEEQEDDEQSEMKRG. The span at 30–40 shows a compositional bias: acidic residues; that stretch reads EGEEEQEDDEQ. Leucine 70 carries the post-translational modification Leucine amide. Positions 72–73 are cleaved as a propeptide — removed in mature form; the sequence is EQ.

As to expression, expressed by the skin glands.

The protein localises to the secreted. Has antiparasitic activity against trypomastigote form of T.cruzi (IC(50)=0.68 uM) in vitro but not against L.infantum. Probably acts by permeabilizing cell membranes. In vitro, shows no cytotoxicity against macrophages. Has antibacterial activity. The sequence is that of Dermaseptin-1 from Pithecopus nordestinus (Northeastern Brazilian leaf frog).